The chain runs to 161 residues: Peptidyl-prolyl cis-trans isomerase 10 (161 aa).

In terms of domain architecture, PPIase cyclophilin-type spans Met1–Ile153.

The protein belongs to the cyclophilin-type PPIase family. PPIL3 subfamily.

It catalyses the reaction [protein]-peptidylproline (omega=180) = [protein]-peptidylproline (omega=0). In terms of biological role, PPIases accelerate the folding of proteins. It catalyzes the cis-trans isomerization of proline imidic peptide bonds in oligopeptides. This chain is Peptidyl-prolyl cis-trans isomerase 10 (cyn-10), found in Caenorhabditis elegans.